The sequence spans 264 residues: 4-hydroxy-tetrahydrodipicolinate reductase (264 aa).

8–13 lines the NAD(+) pocket; the sequence is GPRGNM. An NADP(+)-binding site is contributed by K36. Residues 97 to 99 and 123 to 126 each bind NAD(+); these read GTT and APNF. H153 functions as the Proton donor/acceptor in the catalytic mechanism. H154 is a binding site for (S)-2,3,4,5-tetrahydrodipicolinate. K157 (proton donor) is an active-site residue. Position 163 to 164 (163 to 164) interacts with (S)-2,3,4,5-tetrahydrodipicolinate; the sequence is GT.

It belongs to the DapB family.

The protein localises to the cytoplasm. It carries out the reaction (S)-2,3,4,5-tetrahydrodipicolinate + NAD(+) + H2O = (2S,4S)-4-hydroxy-2,3,4,5-tetrahydrodipicolinate + NADH + H(+). The enzyme catalyses (S)-2,3,4,5-tetrahydrodipicolinate + NADP(+) + H2O = (2S,4S)-4-hydroxy-2,3,4,5-tetrahydrodipicolinate + NADPH + H(+). The protein operates within amino-acid biosynthesis; L-lysine biosynthesis via DAP pathway; (S)-tetrahydrodipicolinate from L-aspartate: step 4/4. Functionally, catalyzes the conversion of 4-hydroxy-tetrahydrodipicolinate (HTPA) to tetrahydrodipicolinate. In Shouchella clausii (strain KSM-K16) (Alkalihalobacillus clausii), this protein is 4-hydroxy-tetrahydrodipicolinate reductase.